A 156-amino-acid chain; its full sequence is ATP synthase subunit b (156 aa).

The helical transmembrane segment at 7–27 (IFFQMLVFFVLGWFTMKFVWP) threads the bilayer.

It belongs to the ATPase B chain family. In terms of assembly, F-type ATPases have 2 components, F(1) - the catalytic core - and F(0) - the membrane proton channel. F(1) has five subunits: alpha(3), beta(3), gamma(1), delta(1), epsilon(1). F(0) has three main subunits: a(1), b(2) and c(10-14). The alpha and beta chains form an alternating ring which encloses part of the gamma chain. F(1) is attached to F(0) by a central stalk formed by the gamma and epsilon chains, while a peripheral stalk is formed by the delta and b chains.

It is found in the cell inner membrane. F(1)F(0) ATP synthase produces ATP from ADP in the presence of a proton or sodium gradient. F-type ATPases consist of two structural domains, F(1) containing the extramembraneous catalytic core and F(0) containing the membrane proton channel, linked together by a central stalk and a peripheral stalk. During catalysis, ATP synthesis in the catalytic domain of F(1) is coupled via a rotary mechanism of the central stalk subunits to proton translocation. Functionally, component of the F(0) channel, it forms part of the peripheral stalk, linking F(1) to F(0). The chain is ATP synthase subunit b from Bordetella pertussis (strain Tohama I / ATCC BAA-589 / NCTC 13251).